A 41-amino-acid polypeptide reads, in one-letter code: Photosystem II reaction center protein L (41 aa).

The chain crosses the membrane as a helical span at residues 20–40 (SLYWGLLLIFVLAVPFSNYFF).

It belongs to the PsbL family. In terms of assembly, PSII is composed of 1 copy each of membrane proteins PsbA, PsbB, PsbC, PsbD, PsbE, PsbF, PsbH, PsbI, PsbJ, PsbK, PsbL, PsbM, PsbT, PsbX, PsbY, PsbZ, Psb30/Ycf12, at least 3 peripheral proteins of the oxygen-evolving complex and a large number of cofactors. It forms dimeric complexes.

The protein resides in the plastid. It localises to the chloroplast thylakoid membrane. Functionally, one of the components of the core complex of photosystem II (PSII). PSII is a light-driven water:plastoquinone oxidoreductase that uses light energy to abstract electrons from H(2)O, generating O(2) and a proton gradient subsequently used for ATP formation. It consists of a core antenna complex that captures photons, and an electron transfer chain that converts photonic excitation into a charge separation. This subunit is found at the monomer-monomer interface and is required for correct PSII assembly and/or dimerization. The polypeptide is Photosystem II reaction center protein L (Pinus koraiensis (Korean pine)).